An 860-amino-acid chain; its full sequence is Ribosome-releasing factor 2, mitochondrial (860 aa).

Residues 45-337 enclose the tr-type G domain; that stretch reads DRTRNIGIIA…AVVNFLPSPL (293 aa). Residues 54 to 61, 118 to 122, and 172 to 175 each bind GTP; these read AHIDAGKT, DTPGH, and NKMD.

This sequence belongs to the TRAFAC class translation factor GTPase superfamily. Classic translation factor GTPase family. EF-G/EF-2 subfamily.

It localises to the mitochondrion. Functionally, mitochondrial GTPase that mediates the disassembly of ribosomes from messenger RNA at the termination of mitochondrial protein biosynthesis. Not involved in the GTP-dependent ribosomal translocation step during translation elongation. This is Ribosome-releasing factor 2, mitochondrial from Debaryomyces hansenii (strain ATCC 36239 / CBS 767 / BCRC 21394 / JCM 1990 / NBRC 0083 / IGC 2968) (Yeast).